The sequence spans 346 residues: Partitioning defective 6 homolog alpha (346 aa).

Positions 1–116 (MARPQRTPAR…SNSLQRRKKG (116 aa)) are interaction with PRKCI and PRKCZ. Positions 15–95 (IVEVKSKFDA…PPLRLLVQKR (81 aa)) constitute a PB1 domain. The interaction with PARD3 and CDC42 stretch occupies residues 126–253 (RTRPPLLISL…VTVKPANQRN (128 aa)). Residues 133–150 (ISLPQDFRQVSSVIDVDL) form the Pseudo-CRIB domain. One can recognise a PDZ domain in the interval 157–250 (RVRLHKHGSD…NLIVTVKPAN (94 aa)). The segment at 257–346 (RGASGRLTGP…IRGDGSGFSL (90 aa)) is disordered. 2 positions are modified to phosphoserine: serine 278 and serine 345.

This sequence belongs to the PAR6 family. Interacts with MAP2K5. Interacts with PARD3. Interacts with GTP-bound forms of CDC42, RHOQ/TC10 and RAC1. Interacts with the N-terminal part of PRKCI and PRKCZ. Part of a complex with PARD3, CDC42 or RAC1 and PRKCI or PRKCZ. Part of a complex with LLGL1 and PRKCI. Interacts with human T-cell leukemia virus type I TAX protein. Interacts with PALS1 and CRB3. Interacts with TGFBR1; involved in TGF-beta induced epithelial to mesenchymal transition. Interacts with ECT2 ('Thr-359' phosphorylated form) and PRKCI. Interacts with DCTN1 and PCM1. In terms of processing, phosphorylated by the TGF-beta receptor. Post-translationally, ubiquitinated by the SCF(FBXO31) complex, leading to its proteasomal degradation. Expressed in pancreas, skeletal muscle, brain and heart. Weakly expressed in kidney and placenta.

Its subcellular location is the cytoplasm. It localises to the cell membrane. It is found in the cell projection. The protein resides in the ruffle. The protein localises to the cell junction. Its subcellular location is the tight junction. It localises to the cytoskeleton. It is found in the microtubule organizing center. The protein resides in the centrosome. The protein localises to the centriolar satellite. Functionally, adapter protein involved in asymmetrical cell division and cell polarization processes. Probably involved in the formation of epithelial tight junctions. Association with PARD3 may prevent the interaction of PARD3 with F11R/JAM1, thereby preventing tight junction assembly. The PARD6-PARD3 complex links GTP-bound Rho small GTPases to atypical protein kinase C proteins. Regulates centrosome organization and function. Essential for the centrosomal recruitment of key proteins that control centrosomal microtubule organization. The sequence is that of Partitioning defective 6 homolog alpha (PARD6A) from Homo sapiens (Human).